We begin with the raw amino-acid sequence, 227 residues long: ATP-dependent dethiobiotin synthetase BioD (227 aa).

13 to 18 (DIGKTY) is a binding site for ATP. A Mg(2+)-binding site is contributed by Thr-17. The active site involves Lys-38. Ser-42 is a substrate binding site. ATP is bound by residues Asp-55, 116–119 (EGSG), and 179–180 (NN). Mg(2+)-binding residues include Asp-55 and Glu-116.

The protein belongs to the dethiobiotin synthetase family. Homodimer. Mg(2+) serves as cofactor.

It localises to the cytoplasm. The enzyme catalyses (7R,8S)-7,8-diammoniononanoate + CO2 + ATP = (4R,5S)-dethiobiotin + ADP + phosphate + 3 H(+). It functions in the pathway cofactor biosynthesis; biotin biosynthesis; biotin from 7,8-diaminononanoate: step 1/2. In terms of biological role, catalyzes a mechanistically unusual reaction, the ATP-dependent insertion of CO2 between the N7 and N8 nitrogen atoms of 7,8-diaminopelargonic acid (DAPA, also called 7,8-diammoniononanoate) to form a ureido ring. This chain is ATP-dependent dethiobiotin synthetase BioD, found in Clostridium botulinum (strain Langeland / NCTC 10281 / Type F).